Consider the following 198-residue polypeptide: Single-stranded DNA cytosine deaminase (198 aa).

Residues 1-30 (MDSLLMKQRKFLYHFKNVRWAKGRHETYLC) carry the Bipartite nuclear localization signal motif. The tract at residues 2–26 (DSLLMKQRKFLYHFKNVRWAKGRHE) is interaction with SUPT6H. The CMP/dCMP-type deaminase domain occupies 23-129 (GRHETYLCYV…KAEPEGLRRL (107 aa)). Residue Thr27 is modified to Phosphothreonine; by PKA. The residue at position 38 (Ser38) is a Phosphoserine; by PKA. Residues 39–42 (ATSF) are important for interaction with CTNNBL1. His56 lines the Zn(2+) pocket. Glu58 serves as the catalytic Proton donor. Zn(2+) is bound by residues Cys87 and Cys90. Residues 88–116 (YDCARHVADFLRGYPNLSLRIFAARLYFC) form a required for interaction with RNF126 region. Positions 183-198 (LYEVDDLRDAFRTLGL) match the Nuclear export signal motif.

It belongs to the cytidine and deoxycytidylate deaminase family. As to quaternary structure, interacts with CTNNBL1; the interaction is important for the immunoglobulin switch activity of AICDA. Interacts (via its NLS) with KPNA1. Interacts with PKA/PRKACA and PRKAR1A/PKR1. Interacts with SUPT6H, TRIM28 and NCL. Directly interacts with MCM3AP; this interaction may favor AICDA recruitment to immunoglobulin variable region genes, hence promoting somatic hypermutations. Requires Zn(2+) as cofactor. Ser-38 is the major site whereas Thr-27 is the minor site of phosphorylation. Phosphorylation regulates its class-switch recombination activity. In terms of processing, probably monoubiquitinated on several residues by RNF126. Expressed in thymus, lung, spleen, kidney, small intestine, lymph node and tonsil.

The protein resides in the nucleus. The protein localises to the cytoplasm. The enzyme catalyses a 2'-deoxycytidine in single-stranded DNA + H2O + H(+) = a 2'-deoxyuridine in single-stranded DNA + NH4(+). Single-stranded DNA-specific cytidine deaminase. Involved in somatic hypermutation (SHM), gene conversion, and class-switch recombination (CSR) in B-lymphocytes by deaminating C to U during transcription of Ig-variable (V) and Ig-switch (S) region DNA. Required for several crucial steps of B-cell terminal differentiation necessary for efficient antibody responses. May also play a role in the epigenetic regulation of gene expression by participating in DNA demethylation. The sequence is that of Single-stranded DNA cytosine deaminase (AICDA) from Canis lupus familiaris (Dog).